Here is a 911-residue protein sequence, read N- to C-terminus: Transcription factor E2F7 (911 aa).

Position 94 is a phosphoserine (S94). The DNA-binding element occupies 141–210 (RKQKSLGLLC…VAKNQYSWHG (70 aa)). Disordered stretches follow at residues 239-281 (QKEL…ANSR), 409-433 (SFNSEQASERTQRKVNSEPSSPYRQ), and 565-706 (SPGS…SPLQ). Basic and acidic residues predominate over residues 243-257 (NPIDHKSGERRRDGC). A DNA-binding region spans residues 281–366 (RKDKSLKIMS…GRKPAFKWIG (86 aa)). Residue S409 is modified to Phosphoserine. The segment covering 415–424 (ASERTQRKVN) has biased composition (basic and acidic residues). Gly residues predominate over residues 566-579 (PGSGSGSGSVGGGS). Basic and acidic residues predominate over residues 599 to 621 (ERRLQEEEEEPATKRQCRDHEDG). A compositionally biased stretch (polar residues) spans 669–687 (KATTNGFVSSEWGNPCSNT). The segment covering 688–698 (EIEKPSEENES) has biased composition (basic and acidic residues). S840 bears the Phosphoserine mark. The segment at 873–911 (FFKTPGSLGDPVLRRKERNQSRSSSSAQRRLEISSGGTD) is disordered.

Belongs to the E2F/DP family. As to quaternary structure, homodimer and heterodimer: mainly forms homodimers and, to a lesser extent, heterodimers with E2F8. Dimerization is important for DNA-binding. Interacts with HIF1A. Interacts with MN1.

It is found in the nucleus. In terms of biological role, atypical E2F transcription factor that participates in various processes such as angiogenesis, polyploidization of specialized cells and DNA damage response. Mainly acts as a transcription repressor that binds DNA independently of DP proteins and specifically recognizes the E2 recognition site 5'-TTTC[CG]CGC-3'. Directly represses transcription of classical E2F transcription factors such as E2F1. Acts as a regulator of S-phase by recognizing and binding the E2-related site 5'-TTCCCGCC-3' and mediating repression of G1/S-regulated genes. Plays a key role in polyploidization of cells in placenta and liver by regulating the endocycle, probably by repressing genes promoting cytokinesis and antagonizing action of classical E2F proteins (E2F1, E2F2 and/or E2F3). Required for placental development by promoting polyploidization of trophoblast giant cells. Also involved in DNA damage response: up-regulated by p53/TP53 following genotoxic stress and acts as a downstream effector of p53/TP53-dependent repression by mediating repression of indirect p53/TP53 target genes involved in DNA replication. Acts as a promoter of sprouting angiogenesis, possibly by acting as a transcription activator: associates with HIF1A, recognizes and binds the VEGFA promoter, which is different from canonical E2 recognition site, and activates expression of the VEGFA gene. Acts as a negative regulator of keratinocyte differentiation. The protein is Transcription factor E2F7 (E2F7) of Bos taurus (Bovine).